The primary structure comprises 180 residues: Cell number regulator 7 (180 aa).

The helical transmembrane segment at 80-102 (AAAGAIYTLLACFTGFQCHWIYS) threads the bilayer.

The protein belongs to the cornifelin family. Expressed in roots, leaves, immature ears and silks. Detected preferentially in silks.

It localises to the membrane. In Zea mays (Maize), this protein is Cell number regulator 7 (CNR7).